The sequence spans 194 residues: Inosine triphosphate pyrophosphatase (194 aa).

10–15 (TTNLKK) provides a ligand contact to ITP. Glutamate 36 provides a ligand contact to Mg(2+). Residues lysine 48, 66-67 (DT), lysine 83, lysine 166, and 171-172 (HR) each bind ITP.

The protein belongs to the HAM1 NTPase family. Homodimer. The cofactor is Mg(2+). Mn(2+) serves as cofactor.

It localises to the cytoplasm. It is found in the nucleus. The catalysed reaction is ITP + H2O = IMP + diphosphate + H(+). The enzyme catalyses dITP + H2O = dIMP + diphosphate + H(+). It catalyses the reaction XTP + H2O = XMP + diphosphate + H(+). Functionally, pyrophosphatase that hydrolyzes non-canonical purine nucleotides such as inosine triphosphate (ITP), deoxyinosine triphosphate (dITP) or xanthosine 5'-triphosphate (XTP) to their respective monophosphate derivatives. The enzyme does not distinguish between the deoxy- and ribose forms. Probably excludes non-canonical purines from RNA and DNA precursor pools, thus preventing their incorporation into RNA and DNA and avoiding chromosomal lesions. This chain is Inosine triphosphate pyrophosphatase, found in Encephalitozoon intestinalis (strain ATCC 50506) (Microsporidian parasite).